Reading from the N-terminus, the 859-residue chain is Leucine--tRNA ligase (859 aa).

A 'HIGH' region motif is present at residues 42–52 (PYPSGKLHVGH). A 'KMSKS' region motif is present at residues 611-615 (KMSKS). ATP is bound at residue Lys-614.

The protein belongs to the class-I aminoacyl-tRNA synthetase family.

Its subcellular location is the cytoplasm. The catalysed reaction is tRNA(Leu) + L-leucine + ATP = L-leucyl-tRNA(Leu) + AMP + diphosphate. The protein is Leucine--tRNA ligase of Fusobacterium nucleatum subsp. nucleatum (strain ATCC 25586 / DSM 15643 / BCRC 10681 / CIP 101130 / JCM 8532 / KCTC 2640 / LMG 13131 / VPI 4355).